The sequence spans 211 residues: Uracil phosphoribosyltransferase (211 aa).

5-phospho-alpha-D-ribose 1-diphosphate contacts are provided by residues arginine 78, arginine 103, and 130–138; that span reads DPMLATGGT. Uracil is bound by residues isoleucine 195 and 200–202; that span reads GDA. Residue aspartate 201 coordinates 5-phospho-alpha-D-ribose 1-diphosphate.

Belongs to the UPRTase family. Mg(2+) serves as cofactor.

The catalysed reaction is UMP + diphosphate = 5-phospho-alpha-D-ribose 1-diphosphate + uracil. It participates in pyrimidine metabolism; UMP biosynthesis via salvage pathway; UMP from uracil: step 1/1. Allosterically activated by GTP. Its function is as follows. Catalyzes the conversion of uracil and 5-phospho-alpha-D-ribose 1-diphosphate (PRPP) to UMP and diphosphate. The sequence is that of Uracil phosphoribosyltransferase from Streptomyces avermitilis (strain ATCC 31267 / DSM 46492 / JCM 5070 / NBRC 14893 / NCIMB 12804 / NRRL 8165 / MA-4680).